The primary structure comprises 160 residues: ATP synthase subunit b, chloroplastic (160 aa).

The helical transmembrane segment at 12–31 (NVINIAILVVILIRFARQVV) threads the bilayer.

The protein belongs to the ATPase B chain family. F-type ATPases have 2 components, F(1) - the catalytic core - and F(0) - the membrane proton channel. F(1) has five subunits: alpha(3), beta(3), gamma(1), delta(1), epsilon(1). F(0) has four main subunits: a(1), b(1), b'(1) and c(10-14). The alpha and beta chains form an alternating ring which encloses part of the gamma chain. F(1) is attached to F(0) by a central stalk formed by the gamma and epsilon chains, while a peripheral stalk is formed by the delta, b and b' chains.

The protein resides in the plastid. Its subcellular location is the chloroplast thylakoid membrane. F(1)F(0) ATP synthase produces ATP from ADP in the presence of a proton or sodium gradient. F-type ATPases consist of two structural domains, F(1) containing the extramembraneous catalytic core and F(0) containing the membrane proton channel, linked together by a central stalk and a peripheral stalk. During catalysis, ATP synthesis in the catalytic domain of F(1) is coupled via a rotary mechanism of the central stalk subunits to proton translocation. Its function is as follows. Component of the F(0) channel, it forms part of the peripheral stalk, linking F(1) to F(0). The chain is ATP synthase subunit b, chloroplastic from Cyanidioschyzon merolae (strain NIES-3377 / 10D) (Unicellular red alga).